The sequence spans 324 residues: Large ribosomal subunit protein uL3m (324 aa).

The N-terminal 41 residues, 1-41, are a transit peptide targeting the mitochondrion; that stretch reads MAAVPRGLLSRINQFLSIRSITPSSSESLPHCSSFFLIRRF. Residues 206-229 are disordered; that stretch reads PASHGASLSHRSGGSTGQRDAPGK.

The protein belongs to the universal ribosomal protein uL3 family. As to quaternary structure, part of the 50S ribosomal subunit.

It is found in the mitochondrion. One of the primary rRNA binding proteins, it binds directly near the 3'-end of the 23S rRNA, where it nucleates assembly of the 50S subunit. This Arabidopsis thaliana (Mouse-ear cress) protein is Large ribosomal subunit protein uL3m.